Consider the following 314-residue polypeptide: Altered inheritance of mitochondria protein 6 homolog ARB_06966 (314 aa).

A signal peptide spans M1 to A21. 2 N-linked (GlcNAc...) asparagine glycosylation sites follow: N91 and N184.

The protein belongs to the AIM6 family.

Its subcellular location is the secreted. This is Altered inheritance of mitochondria protein 6 homolog ARB_06966 from Arthroderma benhamiae (strain ATCC MYA-4681 / CBS 112371) (Trichophyton mentagrophytes).